The chain runs to 370 residues: GTPase Obg (370 aa).

Residues 1–159 form the Obg domain; sequence MKFIDEARIE…RMLKLELKVL (159 aa). A disordered region spans residues 128–147; it reads LHFKSSTNRAPRQKTDGKPG. The 175-residue stretch at 160–334 folds into the OBG-type G domain; sequence ADVGLLGMPN…LCYAIYDYLS (175 aa). GTP contacts are provided by residues 166–173, 191–195, 213–216, 284–287, and 315–317; these read GMPNAGKS, FTTLA, DIPG, NKLD, and SAL. Residues serine 173 and threonine 193 each coordinate Mg(2+).

Belongs to the TRAFAC class OBG-HflX-like GTPase superfamily. OBG GTPase family. As to quaternary structure, monomer. Requires Mg(2+) as cofactor.

It localises to the cytoplasm. Functionally, an essential GTPase which binds GTP, GDP and possibly (p)ppGpp with moderate affinity, with high nucleotide exchange rates and a fairly low GTP hydrolysis rate. Plays a role in control of the cell cycle, stress response, ribosome biogenesis and in those bacteria that undergo differentiation, in morphogenesis control. The chain is GTPase Obg from Burkholderia cenocepacia (strain ATCC BAA-245 / DSM 16553 / LMG 16656 / NCTC 13227 / J2315 / CF5610) (Burkholderia cepacia (strain J2315)).